The sequence spans 391 residues: Chorismate synthase (391 aa).

An NADP(+)-binding site is contributed by Arg48. Residues 126 to 128 (RAS), Gly286, 301 to 305 (KPTSS), and Arg328 each bind FMN.

The protein belongs to the chorismate synthase family. It depends on FMNH2 as a cofactor.

The enzyme catalyses 5-O-(1-carboxyvinyl)-3-phosphoshikimate = chorismate + phosphate. The protein operates within metabolic intermediate biosynthesis; chorismate biosynthesis; chorismate from D-erythrose 4-phosphate and phosphoenolpyruvate: step 7/7. Its function is as follows. Catalyzes the anti-1,4-elimination of the C-3 phosphate and the C-6 proR hydrogen from 5-enolpyruvylshikimate-3-phosphate (EPSP) to yield chorismate, which is the branch point compound that serves as the starting substrate for the three terminal pathways of aromatic amino acid biosynthesis. This reaction introduces a second double bond into the aromatic ring system. In Saccharolobus islandicus (strain M.16.27) (Sulfolobus islandicus), this protein is Chorismate synthase.